The primary structure comprises 602 residues: Glutamyl-tRNA(Gln) amidotransferase subunit B, mitochondrial (602 aa).

Residues 1–52 (MLQQWLRQSPAAAGLLRCSRYRGPQAALLQLSPQRAPTYHAIRSLQTSAAES) constitute a mitochondrion transit peptide. Residues 61–83 (QLKQGAKGLKAQKRQRRESEEAS) form a disordered region.

The protein belongs to the GatB/GatE family. GatB subfamily. In terms of assembly, subunit of the heterotrimeric GatCAB amidotransferase (AdT) complex, composed of A, B and C subunits.

It localises to the mitochondrion. It catalyses the reaction L-glutamyl-tRNA(Gln) + L-glutamine + ATP + H2O = L-glutaminyl-tRNA(Gln) + L-glutamate + ADP + phosphate + H(+). Its function is as follows. Allows the formation of correctly charged Gln-tRNA(Gln) through the transamidation of misacylated Glu-tRNA(Gln) in the mitochondria. The reaction takes place in the presence of glutamine and ATP through an activated gamma-phospho-Glu-tRNA(Gln). The chain is Glutamyl-tRNA(Gln) amidotransferase subunit B, mitochondrial from Aspergillus clavatus (strain ATCC 1007 / CBS 513.65 / DSM 816 / NCTC 3887 / NRRL 1 / QM 1276 / 107).